Reading from the N-terminus, the 154-residue chain is MIIKNLQEFYRLLIPNTQLIAIDYGSKKLGIAMSNGERSIAMPLNTITVVNKTAVINSVLSIIAKYKICGVVIGLPIDMSGVVTQQTNIVMKFAEELAKYTNLPIYLQDERLTTKAANNFLKSFGVKRKDRNNNDDAVAASMILETVLDSIKRY.

Belongs to the YqgF nuclease family.

The protein resides in the cytoplasm. In terms of biological role, could be a nuclease involved in processing of the 5'-end of pre-16S rRNA. The polypeptide is Putative pre-16S rRNA nuclease (Rickettsia canadensis (strain McKiel)).